The following is a 304-amino-acid chain: CD-NTase-associated protein 6 (304 aa).

75-80 (GTGKTS) contacts ATP.

It belongs to the AAA ATPase family. As to quaternary structure, oligomerizes. Homohexamer. Forms a 1:1:6 CdnD:Cap7:Cap6 complex.

Regulates complex assembly in a CBASS antivirus system. CBASS (cyclic oligonucleotide-based antiphage signaling system) provides immunity against bacteriophage. The CD-NTase protein synthesizes cyclic nucleotides in response to infection; these serve as specific second messenger signals. The signals activate a diverse range of effectors, leading to bacterial cell death and thus abortive phage infection. A type III-C(AAA) CBASS system. In terms of biological role, prevents the CdnD:Cap7:Cap8 complex (also called CdnD:HORMA2:HORMA3) from synthesizing 2',3',3'-cyclic AMP-AMP-AMP (cAAA). Binds and disassembles an active CdnD:Cap7:Cap8 complex, inhibiting the complex's ability to synthesize cyclic nucleotide second messengers. An AAA+-ATPase remodeler, in the absence of foreign threat Cap6 probably maintains the Cap7 protein in an open, inactive state. Once activated (presumably by a bacteriophage protein) Cap7 binds to and activates its cognate CD-NTase (CdnD in this bacteria) to synthesize cAAA, a cyclic nucleotide second messenger. cAAA activates the NucC endonuclease which degrades all DNA in the infected cell, causing cell death and abortive phage infection. In Pseudomonas aeruginosa, this protein is CD-NTase-associated protein 6.